Consider the following 83-residue polypeptide: Exodeoxyribonuclease 7 small subunit (83 aa).

Belongs to the XseB family. As to quaternary structure, heterooligomer composed of large and small subunits.

It localises to the cytoplasm. The enzyme catalyses Exonucleolytic cleavage in either 5'- to 3'- or 3'- to 5'-direction to yield nucleoside 5'-phosphates.. In terms of biological role, bidirectionally degrades single-stranded DNA into large acid-insoluble oligonucleotides, which are then degraded further into small acid-soluble oligonucleotides. The polypeptide is Exodeoxyribonuclease 7 small subunit (Nitrobacter hamburgensis (strain DSM 10229 / NCIMB 13809 / X14)).